Reading from the N-terminus, the 276-residue chain is Glutamate racemase (276 aa).

Residues 9 to 10 and 41 to 42 each bind substrate; these read DS and YG. C72 functions as the Proton donor/acceptor in the catalytic mechanism. Residue 73–74 participates in substrate binding; that stretch reads NT. The Proton donor/acceptor role is filled by C183. Position 184–185 (184–185) interacts with substrate; that stretch reads TH.

This sequence belongs to the aspartate/glutamate racemases family.

It carries out the reaction L-glutamate = D-glutamate. It functions in the pathway cell wall biogenesis; peptidoglycan biosynthesis. Provides the (R)-glutamate required for cell wall biosynthesis. This chain is Glutamate racemase, found in Shouchella clausii (strain KSM-K16) (Alkalihalobacillus clausii).